Consider the following 423-residue polypeptide: Mannose-6-phosphate isomerase (423 aa).

Ala2 bears the N-acetylalanine mark. Residues Ser102 and Ser108 each carry the phosphoserine modification. Zn(2+) contacts are provided by Gln110, His112, Glu137, and His276. Residue Arg295 is part of the active site.

Belongs to the mannose-6-phosphate isomerase type 1 family. Requires Zn(2+) as cofactor.

The protein resides in the cytoplasm. The catalysed reaction is D-mannose 6-phosphate = D-fructose 6-phosphate. It functions in the pathway nucleotide-sugar biosynthesis; GDP-alpha-D-mannose biosynthesis; alpha-D-mannose 1-phosphate from D-fructose 6-phosphate: step 1/2. Functionally, isomerase that catalyzes the interconversion of fructose-6-P and mannose-6-P and has a critical role in the supply of D-mannose derivatives required for many eukaryotic glycosylation reactions. This chain is Mannose-6-phosphate isomerase (MPI), found in Macaca fascicularis (Crab-eating macaque).